We begin with the raw amino-acid sequence, 442 residues long: tRNA modification GTPase MnmE (442 aa).

(6S)-5-formyl-5,6,7,8-tetrahydrofolate contacts are provided by R21, E79, and K118. The region spanning 214–367 (GFKIAIVGKP…LKEELQNYLN (154 aa)) is the TrmE-type G domain. Residue N224 coordinates K(+). GTP-binding positions include 224-229 (NVGKSS), 243-249 (SDIAGTT), and 268-271 (DTAG). S228 contacts Mg(2+). K(+)-binding residues include S243, I245, and T248. A Mg(2+)-binding site is contributed by T249. K442 lines the (6S)-5-formyl-5,6,7,8-tetrahydrofolate pocket.

The protein belongs to the TRAFAC class TrmE-Era-EngA-EngB-Septin-like GTPase superfamily. TrmE GTPase family. In terms of assembly, homodimer. Heterotetramer of two MnmE and two MnmG subunits. K(+) is required as a cofactor.

It is found in the cytoplasm. Exhibits a very high intrinsic GTPase hydrolysis rate. Involved in the addition of a carboxymethylaminomethyl (cmnm) group at the wobble position (U34) of certain tRNAs, forming tRNA-cmnm(5)s(2)U34. This Campylobacter jejuni (strain RM1221) protein is tRNA modification GTPase MnmE.